The chain runs to 245 residues: 4-hydroxy-tetrahydrodipicolinate reductase (245 aa).

Residues Gly7–Val12, Gly75–Thr77, and Ala102–Phe105 contribute to the NAD(+) site. The Proton donor/acceptor role is filled by His132. Residue His133 coordinates (S)-2,3,4,5-tetrahydrodipicolinate. Residue Lys136 is the Proton donor of the active site. (S)-2,3,4,5-tetrahydrodipicolinate is bound at residue Gly142–Thr143.

Belongs to the DapB family.

It is found in the cytoplasm. It catalyses the reaction (S)-2,3,4,5-tetrahydrodipicolinate + NAD(+) + H2O = (2S,4S)-4-hydroxy-2,3,4,5-tetrahydrodipicolinate + NADH + H(+). The catalysed reaction is (S)-2,3,4,5-tetrahydrodipicolinate + NADP(+) + H2O = (2S,4S)-4-hydroxy-2,3,4,5-tetrahydrodipicolinate + NADPH + H(+). It participates in amino-acid biosynthesis; L-lysine biosynthesis via DAP pathway; (S)-tetrahydrodipicolinate from L-aspartate: step 4/4. Its function is as follows. Catalyzes the conversion of 4-hydroxy-tetrahydrodipicolinate (HTPA) to tetrahydrodipicolinate. The polypeptide is 4-hydroxy-tetrahydrodipicolinate reductase (Mycobacterium sp. (strain JLS)).